The chain runs to 208 residues: Ribosomal RNA small subunit methyltransferase G (208 aa).

S-adenosyl-L-methionine is bound by residues Gly-76, Leu-81, 127–128, and Arg-142; that span reads VE.

The protein belongs to the methyltransferase superfamily. RNA methyltransferase RsmG family.

The protein localises to the cytoplasm. It carries out the reaction guanosine(527) in 16S rRNA + S-adenosyl-L-methionine = N(7)-methylguanosine(527) in 16S rRNA + S-adenosyl-L-homocysteine. In terms of biological role, specifically methylates the N7 position of guanine in position 527 of 16S rRNA. The polypeptide is Ribosomal RNA small subunit methyltransferase G (Legionella pneumophila (strain Lens)).